A 473-amino-acid polypeptide reads, in one-letter code: Photosystem II CP43 reaction center protein (473 aa).

The propeptide occupies 1 to 14 (MKTLYSLRRYYPVE). The residue at position 15 (T15) is an N-acetylthreonine. T15 is modified (phosphothreonine). 5 helical membrane-spanning segments follow: residues 69–93 (LFEV…PHLA), 134–155 (LIGP…KDKN), 178–200 (KASF…REIT), 255–275 (KPFA…LSYS), and 291–312 (WFNN…ASQA). Residue E367 participates in [CaMn4O5] cluster binding. A helical membrane pass occupies residues 447 to 471 (RARAAAAGFEKGIDRDSEPVLSMTP).

The protein belongs to the PsbB/PsbC family. PsbC subfamily. In terms of assembly, PSII is composed of 1 copy each of membrane proteins PsbA, PsbB, PsbC, PsbD, PsbE, PsbF, PsbH, PsbI, PsbJ, PsbK, PsbL, PsbM, PsbT, PsbX, PsbY, PsbZ, Psb30/Ycf12, at least 3 peripheral proteins of the oxygen-evolving complex and a large number of cofactors. It forms dimeric complexes. Binds multiple chlorophylls and provides some of the ligands for the Ca-4Mn-5O cluster of the oxygen-evolving complex. It may also provide a ligand for a Cl- that is required for oxygen evolution. PSII binds additional chlorophylls, carotenoids and specific lipids. is required as a cofactor.

It is found in the plastid. It localises to the chloroplast thylakoid membrane. One of the components of the core complex of photosystem II (PSII). It binds chlorophyll and helps catalyze the primary light-induced photochemical processes of PSII. PSII is a light-driven water:plastoquinone oxidoreductase, using light energy to abstract electrons from H(2)O, generating O(2) and a proton gradient subsequently used for ATP formation. This Anthoceros angustus (Hornwort) protein is Photosystem II CP43 reaction center protein.